Reading from the N-terminus, the 702-residue chain is Polyribonucleotide nucleotidyltransferase (702 aa).

Positions 493 and 499 each coordinate Mg(2+). The region spanning 559 to 619 (PKVEIFNVDP…NLISQSKEYI (61 aa)) is the KH domain. The region spanning 643-702 (GEEFLGRVQKVVEFGVFVELKEGVDGLLHNSKIKEKLEVGHEIKVKVAEIKNGKVSLDLA) is the S1 motif domain.

It belongs to the polyribonucleotide nucleotidyltransferase family. Mg(2+) is required as a cofactor.

The protein resides in the cytoplasm. It carries out the reaction RNA(n+1) + phosphate = RNA(n) + a ribonucleoside 5'-diphosphate. Involved in mRNA degradation. Catalyzes the phosphorolysis of single-stranded polyribonucleotides processively in the 3'- to 5'-direction. The protein is Polyribonucleotide nucleotidyltransferase of Campylobacter lari (strain RM2100 / D67 / ATCC BAA-1060).